Consider the following 513-residue polypeptide: ATP synthase subunit alpha, mitochondrial (513 aa).

Residue Gly170–Thr177 coordinates ATP.

It belongs to the ATPase alpha/beta chains family. F-type ATPases have 2 components, CF(1) - the catalytic core - and CF(0) - the membrane proton channel. CF(1) has five subunits: alpha(3), beta(3), gamma(1), delta(1), epsilon(1). CF(0) has three main subunits: a, b and c.

The protein localises to the mitochondrion. The protein resides in the mitochondrion inner membrane. Mitochondrial membrane ATP synthase (F(1)F(0) ATP synthase or Complex V) produces ATP from ADP in the presence of a proton gradient across the membrane which is generated by electron transport complexes of the respiratory chain. F-type ATPases consist of two structural domains, F(1) - containing the extramembraneous catalytic core, and F(0) - containing the membrane proton channel, linked together by a central stalk and a peripheral stalk. During catalysis, ATP synthesis in the catalytic domain of F(1) is coupled via a rotary mechanism of the central stalk subunits to proton translocation. Subunits alpha and beta form the catalytic core in F(1). Rotation of the central stalk against the surrounding alpha(3)beta(3) subunits leads to hydrolysis of ATP in three separate catalytic sites on the beta subunits. Subunit alpha does not bear the catalytic high-affinity ATP-binding sites. The polypeptide is ATP synthase subunit alpha, mitochondrial (ATPA) (Marchantia polymorpha (Common liverwort)).